Consider the following 429-residue polypeptide: 3-phosphoshikimate 1-carboxyvinyltransferase (429 aa).

3 residues coordinate 3-phosphoshikimate: Lys22, Ser23, and Arg27. Position 22 (Lys22) interacts with phosphoenolpyruvate. Positions 94 and 122 each coordinate phosphoenolpyruvate. Positions 167, 169, 315, and 342 each coordinate 3-phosphoshikimate. Phosphoenolpyruvate is bound at residue Gln169. Asp315 (proton acceptor) is an active-site residue. Phosphoenolpyruvate is bound by residues Arg346 and Arg388.

The protein belongs to the EPSP synthase family. In terms of assembly, monomer.

The protein resides in the cytoplasm. It catalyses the reaction 3-phosphoshikimate + phosphoenolpyruvate = 5-O-(1-carboxyvinyl)-3-phosphoshikimate + phosphate. It functions in the pathway metabolic intermediate biosynthesis; chorismate biosynthesis; chorismate from D-erythrose 4-phosphate and phosphoenolpyruvate: step 6/7. Functionally, catalyzes the transfer of the enolpyruvyl moiety of phosphoenolpyruvate (PEP) to the 5-hydroxyl of shikimate-3-phosphate (S3P) to produce enolpyruvyl shikimate-3-phosphate and inorganic phosphate. The polypeptide is 3-phosphoshikimate 1-carboxyvinyltransferase (Geotalea daltonii (strain DSM 22248 / JCM 15807 / FRC-32) (Geobacter daltonii)).